The following is a 441-amino-acid chain: Ribosomal protein uS12 methylthiotransferase RimO (441 aa).

Residues 8–118 (PKIGFVSLGC…VLEHVHHYSP (111 aa)) enclose the MTTase N-terminal domain. Positions 17, 53, 82, 150, 154, and 157 each coordinate [4Fe-4S] cluster. A Radical SAM core domain is found at 136-373 (LTPRHYAYLK…MQLQQQISAE (238 aa)). Residues 376–441 (QEKVGREILV…DEYDLWGTRV (66 aa)) enclose the TRAM domain.

The protein belongs to the methylthiotransferase family. RimO subfamily. [4Fe-4S] cluster serves as cofactor.

The protein resides in the cytoplasm. It catalyses the reaction L-aspartate(89)-[ribosomal protein uS12]-hydrogen + (sulfur carrier)-SH + AH2 + 2 S-adenosyl-L-methionine = 3-methylsulfanyl-L-aspartate(89)-[ribosomal protein uS12]-hydrogen + (sulfur carrier)-H + 5'-deoxyadenosine + L-methionine + A + S-adenosyl-L-homocysteine + 2 H(+). In terms of biological role, catalyzes the methylthiolation of an aspartic acid residue of ribosomal protein uS12. This is Ribosomal protein uS12 methylthiotransferase RimO from Klebsiella pneumoniae (strain 342).